A 378-amino-acid chain; its full sequence is Histidine decarboxylase (378 aa).

His-120 contributes to the substrate binding site. The residue at position 233 (Lys-233) is an N6-(pyridoxal phosphate)lysine.

This sequence belongs to the group II decarboxylase family. In terms of assembly, homotetramer. Requires pyridoxal 5'-phosphate as cofactor.

The enzyme catalyses L-histidine + H(+) = histamine + CO2. This is Histidine decarboxylase (hdc) from Klebsiella aerogenes (Enterobacter aerogenes).